Consider the following 1399-residue polypeptide: DNA-directed RNA polymerase subunit beta' (1399 aa).

Residues C70, C72, C85, and C88 each contribute to the Zn(2+) site. 3 residues coordinate Mg(2+): D460, D462, and D464. The Zn(2+) site is built by C814, C888, C895, and C898. The segment at 1367 to 1399 is disordered; that stretch reads SERKRQRDLGKPQRVSASEAEAALTEALNSSGN. Residues 1382–1399 are compositionally biased toward low complexity; sequence SASEAEAALTEALNSSGN.

The protein belongs to the RNA polymerase beta' chain family. In terms of assembly, the RNAP catalytic core consists of 2 alpha, 1 beta, 1 beta' and 1 omega subunit. When a sigma factor is associated with the core the holoenzyme is formed, which can initiate transcription. Mg(2+) is required as a cofactor. Requires Zn(2+) as cofactor.

The enzyme catalyses RNA(n) + a ribonucleoside 5'-triphosphate = RNA(n+1) + diphosphate. Functionally, DNA-dependent RNA polymerase catalyzes the transcription of DNA into RNA using the four ribonucleoside triphosphates as substrates. The polypeptide is DNA-directed RNA polymerase subunit beta' (Pseudomonas aeruginosa (strain UCBPP-PA14)).